A 212-amino-acid chain; its full sequence is Large ribosomal subunit protein uL1 (212 aa).

It belongs to the universal ribosomal protein uL1 family. In terms of assembly, part of the 50S ribosomal subunit.

In terms of biological role, binds directly to 23S rRNA. Probably involved in E site tRNA release. Its function is as follows. Protein L1 is also a translational repressor protein, it controls the translation of its operon by binding to its mRNA. This is Large ribosomal subunit protein uL1 from Haloarcula marismortui (strain ATCC 43049 / DSM 3752 / JCM 8966 / VKM B-1809) (Halobacterium marismortui).